Consider the following 77-residue polypeptide: UPF0401 protein ECP_3853 (77 aa).

The protein belongs to the UPF0401 family.

This Escherichia coli O6:K15:H31 (strain 536 / UPEC) protein is UPF0401 protein ECP_3853.